We begin with the raw amino-acid sequence, 3124 residues long: MRTALCSAVAALCAAALLSSIEAEVNPPSDLNFTIIDEHNVQMSWKRPPDAIVGYRITVVPTNDGPTKEFTLSPSTTQTVLSDLIPEIEYVVSIASYDEVEESLPVFGQLTIQTGGPGIPEEKKVEAQIQKCSISAMTDLVFLVDGSWSVGRNNFRYILDFMVALVSAFDIGEEKTRVGVVQYSSDTRTEFNLNQYFRRSDLLDAIKRIPYKGGNTMTGEAIDYLVKNTFTESAGARKGFPKVAIVITDGKAQDEVEIPARELRNIGVEVFSLGIKAADAKELKLIASQPSLKHVFNVANFDGIVDIQNEIILQVCSGVDEQLGELVSGEEVVEPASNLVATQISSKSVRITWDPSTSQITGYRVQFIPMIAGGKQHVLSVGPQTTALNVKDLSPDTEYQINVYAMKGLTPSEPITIMEKTQQVKVQVECSRGVDVKADVVFLVDGSYSIGIANFVKVRAFLEVLVKSFEISPRKVQISLVQYSRDPHMEFSLNRYNRVKDIIQAINTFPYRGGSTNTGKAMTYVREKVFVTSKGSRPNVPRVMILITDGKSSDAFKEPAIKLRDADVEIFAVGVKDAVRTELEAIASPPAETHVYTVEDFDAFQRISFELTQSVCLRIEQELAAIRKKSYVPAKNMVFSDVTSDSFKVSWSAAGSEEKSYLIKYKVAIGGDEFIVSVPASSTSSVLTNLLPETTYAVSVIAEYEDGDGPPLDGEETTLEVKGAPRNLRITDETTDSFIVGWTPAPGNVLRYRLVYRPLTGGERRQVTVSANERSTTLRNLIPDTRYEVSVIAEYQSGPGNALNGYAKTDEVRGNPRNLRVSDATTSTTMKLSWSAAPGKVQHVLYNLHTRYAGVETKELTVKGDTTSKELKGLDEATRYALTVSALYASGAGEALSGEGETLEERGSPRNLITTDITDTTVGLSWTPAPGTVNNYRIVWKSLYDDTMGEKRVPGNTVDAVLDGLEPETKYRISIYAAYSSGEGDPVEGEAFTDVSQSARTVTVDNETENTMRVSVAALTWEGLVLARVLPNRSGGRQMFGKVNASATSIVLKRLKPRTTYDLSVVPIYDFGQGKSRKAEGTTASPFKPPRNLRTSDSTMSSFRVTWEPAPGRVKGYKVTFHPTEDDRNLGELVVGPYDSTVVLEELRAGTTYKVNVFGMFDGGESNPLVGQEMTTLSDTTTEPFLSRGLECRTRAEADIVLLVDGSWSIGRPNFKTVRNFISRIVEVFDIGPDKVQIGLAQYSGDPRTEWNLNAYRTKEALLDAVTNLPYKGGNTLTGMALDFILKNNFKQEAGLRPRARKIGVLITDGKSQDDVVTPSRRLRDEGVELYAIGIKNADENELKQIATDPDDIHAYNVADFSFLASIGEDVTTNLCNSVKGPGDLPPPSNLVISEVTPHSFRLRWSPPPESVDRYRVEYYPTTGGPPKQFYVSRMETTTVLKDLTPETEYIVNVFSVVEDESSEPLIGREITYPLSSVRNLNVYDIGSTSMRVRWEPVNGATGYLLTYEPVNATVPTTEKEMRVGPSVNEVQLVDLIPNTEYTLTAYVLYGDITSDPLTSQEVTLPLPGPRGVTIRDVTHSTMNVLWDPAPGKVRKYIIRYKIADEADVKEVEIDRLKTSTTLTDLSSQRLYNVKVVAVYDEGESLPVVASCYSAVPSPVNLRITEITKNSFRGTWDHGAPDVSLYRITWGPYGRSEKAESIVNGDVNSLLFENLNPDTLYEVSVTAIYPDESETVDDLIGSERTLPLVPITTPAPKSGPRNLQVYNATSHSLTVKWDPASGRVQRYKIIYQPINGDGPEQSTMVGGRQNSVVIQKLQPDTPYAITVSSMYADGEGGRMTGRGRTKPLTTVKNMLVYDPTTSTLNVRWDHAEGNPRQYKVFYRPTAGGAEEMTTVPGNTNYVILRSLEPNTPYTVTVVPVFPEGDGGRTTDTGRTLERGTPRNIQVYNPTPNSMNVRWEPAPGPVQQYRVNYSPLSGPRPSESIVVPANTRDVMLERLTPDTAYSINVIALYADGEGNPSQAQGRTLPRSGPRNLRVFDETTNSLSVQWDHADGPVQQYRIIYSPTVGDPIDEYTTVPGIRNNVILQPLQSDTPYKITVVAVYEDGDGGQLTGNGRTVGLLPPQNIYITDEWYTRFRVSWDPSPSPVLGYKIVYKPVGSNEPMEVFVGEVTSYTLHNLSPSTTYDVNVYAQYDSGMSIPLTDQGTTLYLNVTDLTTYKIGWDTFCIRWSPHRSATSYRLKLNPADGSRGQEITVRGSETSHCFTGLSPDTEYNATVFVQTPNLEGPPVSVREHTVLKPTEAPTPPPTPPPPPTIPPARDVCRGAKADIVFLTDASWSIGDDNFNKVVKFVFNTVGAFDLINPAGIQVSLVQYSDEAQSEFKLNTFDDKAQALGALQNVQYRGGNTRTGKALTFIKEKVLTWESGMRRGVPKVLVVVTDGRSQDEVRKAATVIQHSGFSVFVVGVADVDYNELAKIASKPSERHVFIVDDFDAFEKIQDNLVTFVCETATSTCPLIYLEGYTSPGFKMLESYNLTEKHFASVQGVSLESGSFPSYVAYRLHKNAFVSQPIREIHPEGLPQAYTIIMLFRLLPESPSEPFAIWQITDRDYKPQVGVVLDPGSKVLSFFNKDTRGEVQTVTFDNDEVKKIFYGSFHKVHIVVTSSNVKIYIDCSEILEKPIKEAGNITTDGYEILGKLLKGDRRSATLEIQNFDIVCSPVWTSRDRCCDLPSMRDEAKCPALPNACTCTQDSVGPPGPPGPPGGPGAKGPRGERGLTGSSGPPGPRGETGPPGPQGPPGPQGPNGLQIPGEPGRQGMKGDAGQPGLPGRSGTPGLPGPPGPVGPPGERGFTGKDGPTGPRGPPGPAGAPGVPGVAGPSGKPGKPGDRGTPGTPGMKGEKGDRGDIASQNMMRAVARQVCEQLINGQMSRFNQMLNQIPNDYYSNRNQPGPPGPPGPPGAAGTRGEPGPGGRPGFPGPPGVQGPPGERGMPGEKGERGTGSQGPRGLPGPPGPQGESRTGPPGSTGSRGPPGPPGRPGNAGIRGPPGPPGYCDSSQCASIPYNGQGFPEPYVPESGPYQPEGEPFIVPMESERREDEYEDYGVEMHSPEYPEHMRWKRSLSRKAKRKP.

An N-terminal signal peptide occupies residues 1–23; the sequence is MRTALCSAVAALCAAALLSSIEA. The Fibronectin type-III 1 domain maps to 27–117; it reads PPSDLNFTII…GQLTIQTGGP (91 aa). N-linked (GlcNAc...) asparagine glycosylation is present at asparagine 32. The 173-residue stretch at 139-311 folds into the VWFA 1 domain; that stretch reads DLVFLVDGSW…DGIVDIQNEI (173 aa). Serine 328 carries an O-linked (Xyl...) (chondroitin sulfate) serine glycan. Positions 335 to 424 constitute a Fibronectin type-III 2 domain; sequence PASNLVATQI…ITIMEKTQQV (90 aa). Residues 439–615 enclose the VWFA 2 domain; that stretch reads DVVFLVDGSY…RISFELTQSV (177 aa). Fibronectin type-III domains follow at residues 633 to 722, 724 to 815, 816 to 906, 908 to 998, 999 to 1087, and 1089 to 1179; these read PAKN…LEVK, APRN…VRGN, PRNL…LEER, SPRN…VSQS, ARTV…ASPF, and PPRN…TLSD. O-linked (Xyl...) (chondroitin sulfate) serine glycosylation is found at serine 797, serine 890, and serine 981. 3 N-linked (GlcNAc...) asparagine glycosylation sites follow: asparagine 1006, asparagine 1032, and asparagine 1044. Positions 1075–1100 are disordered; it reads KSRKAEGTTASPFKPPRNLRTSDSTM. The VWFA 3 domain occupies 1199-1371; it reads DIVLLVDGSW…SFLASIGEDV (173 aa). Fibronectin type-III domains are found at residues 1387–1476, 1477–1568, 1569–1659, 1660–1756, 1759–1853, 1854–1939, 1940–2030, 2031–2121, 2122–2210, and 2211–2299; these read PPSN…YPLS, SVRN…LPLP, GPRG…VPSP, VNLR…TPAP, GPRN…TVKN, MLVY…LERG, TPRN…LPRS, GPRN…VGLL, PPQN…LYLN, and VTDL…LKPT. The N-linked (GlcNAc...) asparagine glycan is linked to asparagine 1512. N-linked (GlcNAc...) asparagine glycosylation is present at asparagine 1767. Asparagine 2210 and asparagine 2273 each carry an N-linked (GlcNAc...) asparagine glycan. One can recognise a VWFA 4 domain in the interval 2327–2500; it reads DIVFLTDASW…DAFEKIQDNL (174 aa). Residues 2455–2750 form a nonhelical region (NC3) region; the sequence is SGFSVFVVGV…NACTCTQDSV (296 aa). In terms of domain architecture, Laminin G-like spans 2524 to 2716; the sequence is GFKMLESYNL…IQNFDIVCSP (193 aa). N-linked (GlcNAc...) asparagine glycosylation is found at asparagine 2532 and asparagine 2683. Disordered stretches follow at residues 2749–2900 and 2935–3080; these read SVGP…GDRG and PNDY…EGEP. Collagen-like domains lie at 2751 to 2802, 2807 to 2858, and 2859 to 2900; these read GPPG…GPNG, GEPG…GPRG, and PPGP…GDRG. Residues 2751–2902 are triple-helical region (COL2) with 1 imperfection; it reads GPPGPPGPPG…KGEKGDRGDI (152 aa). Composition is skewed to pro residues over residues 2752-2761 and 2788-2798; these read PPGPPGPPGG and PPGPQGPPGPQ. Low complexity predominate over residues 2821–2830; the sequence is PGLPGRSGTP. A compositionally biased stretch (pro residues) spans 2832–2841; the sequence is LPGPPGPVGP. Low complexity-rich tracts occupy residues 2842-2854 and 2865-2878; these read PGER…DGPT and APGV…SGKP. Positions 2899 to 2901 match the Cell attachment site motif; the sequence is RGD. Positions 2903-2945 are nonhelical region (NC2); it reads ASQNMMRAVARQVCEQLINGQMSRFNQMLNQIPNDYYSNRNQP. Residues 2935–2944 are compositionally biased toward polar residues; sequence PNDYYSNRNQ. The span at 2945-2954 shows a compositional bias: pro residues; it reads PGPPGPPGPP. The Collagen-like 4 domain occupies 2945 to 2994; it reads PGPPGPPGPPGAAGTRGEPGPGGRPGFPGPPGVQGPPGERGMPGEKGERG. Positions 2946–3048 are triple-helical region (COL1) with 2 imperfections; it reads GPPGPPGPPG…RGPPGPPGYC (103 aa). Residues 2961-2970 show a composition bias toward gly residues; sequence GEPGPGGRPG. Low complexity predominate over residues 3010–3024; sequence QGESRTGPPGSTGSR. Residues 3049–3124 form a nonhelical region (NC1) region; it reads DSSQCASIPY…SLSRKAKRKP (76 aa).

The protein belongs to the fibril-associated collagens with interrupted helices (FACIT) family. Trimer of identical chains each containing 190 kDa of non-triple-helical sequences. In terms of processing, the triple-helical tail is stabilized by disulfide bonds at each end. Post-translationally, prolines at the third position of the tripeptide repeating unit (G-X-Y) are hydroxylated in some or all of the chains. O-glycosylated; glycosaminoglycan of chondroitin-sulfate type. As to expression, type XII collagen is present in tendons, ligaments, perichondrium, and periosteum, all dense connective tissues containing type I collagen.

It is found in the secreted. The protein localises to the extracellular space. It localises to the extracellular matrix. Its function is as follows. Type XII collagen interacts with type I collagen-containing fibrils, the COL1 domain could be associated with the surface of the fibrils, and the COL2 and NC3 domains may be localized in the perifibrillar matrix. The sequence is that of Collagen alpha-1(XII) chain (COL12A1) from Gallus gallus (Chicken).